Here is an 839-residue protein sequence, read N- to C-terminus: Autophagy-related protein 9A (839 aa).

A2 carries the post-translational modification N-acetylalanine. Residues 2–61 (AQFDTEYQRLEASYSDSPPGEEDLLVHVAEGSKSPWHHIENLDLFFSRVYNLHQKNGFTC) are Cytoplasmic-facing. A Tyrosine-based sorting signal motif is present at residues 8 to 11 (YQRL). A phosphoserine mark is found at S14, S16, and S18. The helical transmembrane segment at 62-84 (MLIGEMFELMQFLFVVAFTTFLV) threads the bilayer. Residues 85–128 (SCVDYDILFANKMVNHSLHPTEPVKVTLPDAFLPAQVCSARIQE) lie on the Lumenal side of the membrane. Residue N99 is glycosylated (N-linked (GlcNAc...) asparagine). Residues 129–154 (NGSLITILVIAGVFWIHRLIKFIYNI) form a helical membrane-spanning segment. Residues 155–290 (CCYWEIHSFY…ELAQRLSNRI (136 aa)) are Cytoplasmic-facing. Residues 291-301 (LWIGIANFLLC) lie within the membrane without spanning it. The Cytoplasmic portion of the chain corresponds to 302–319 (PLILIWQILYAFFSYAEV). Residues 320 to 328 (LKREPGALG) lie within the membrane without spanning it. Topologically, residues 329–371 (ARCWSLYGRCYLRHFNELEHELQSRLNRGYKPASKYMNCFLSP) are cytoplasmic. The helical transmembrane segment at 372–397 (LLTLLAKNGAFFAGSILAVLIALTIY) threads the bilayer. The Lumenal segment spans residues 398-406 (DEDVLAVEH). Residues 407-424 (VLTTVTLLGVTVTVCRSF) form a helical membrane-spanning segment. Residues 425 to 470 (IPDQHMVFCPEQLLRVILAHIHYMPDHWQGNAHRSQTRDEFAQLFQ) are Cytoplasmic-facing. An intramembrane segment occupies 471-480 (YKAVFILEEL). Residues 481-483 (LSP) lie on the Cytoplasmic side of the membrane. The stretch at 484 to 492 (IVTPLILIF) is an intramembrane region. Topologically, residues 493 to 839 (CLRPRALEII…DELPPQVHKV (347 aa)) are cytoplasmic. S656 bears the Phosphoserine mark. Disordered stretches follow at residues 657-686 (PLQPGAAPQGRVPSTMTGSGVDARTASSGS) and 717-839 (HKQQ…VHKV). The segment covering 724 to 736 (EPERHVWHRRESD) has biased composition (basic and acidic residues). Residues S735, S738, S741, and S828 each carry the phosphoserine modification. Composition is skewed to acidic residues over residues 737–747 (ESGESAPEEGG) and 823–832 (VPEEGSEDEL).

It belongs to the ATG9 family. In terms of assembly, homotrimer; forms a homotrimer with a central pore that forms a path between the two membrane leaflets. Interacts (via cytoplasmic its C-terminus) with ATG2A. Interacts with SUPT20H. Interacts (via the tyrosine-based sorting signal motif) with AP4M1; promoting association with the AP-4 complex. Interacts with ARFIP1 and ARFIP2. Interacts with ATG4A; the interaction is direct and promotes ATG9A trafficking. Ufmylated in a DDRGK1 dependent manner.

It localises to the preautophagosomal structure membrane. The protein localises to the cytoplasmic vesicle. It is found in the autophagosome membrane. Its subcellular location is the golgi apparatus. The protein resides in the trans-Golgi network membrane. It localises to the late endosome membrane. The protein localises to the recycling endosome membrane. It is found in the endoplasmic reticulum membrane. Its subcellular location is the mitochondrion membrane. It carries out the reaction a 1,2-diacyl-sn-glycero-3-phosphocholine(in) = a 1,2-diacyl-sn-glycero-3-phosphocholine(out). The enzyme catalyses a 1,2-diacyl-sn-glycero-3-phospho-L-serine(in) = a 1,2-diacyl-sn-glycero-3-phospho-L-serine(out). The catalysed reaction is a 1,2-diacyl-sn-glycero-3-phosphoethanolamine(in) = a 1,2-diacyl-sn-glycero-3-phosphoethanolamine(out). In terms of biological role, phospholipid scramblase involved in autophagy by mediating autophagosomal membrane expansion. Cycles between the preautophagosomal structure/phagophore assembly site (PAS) and the cytoplasmic vesicle pool and supplies membrane for the growing autophagosome. Lipid scramblase activity plays a key role in preautophagosomal structure/phagophore assembly by distributing the phospholipids that arrive through ATG2 (ATG2A or ATG2B) from the cytoplasmic to the luminal leaflet of the bilayer, thereby driving autophagosomal membrane expansion. Also required to supply phosphatidylinositol 4-phosphate to the autophagosome initiation site by recruiting the phosphatidylinositol 4-kinase beta (PI4KB) in a process dependent on ARFIP2, but not ARFIP1. In addition to autophagy, also plays a role in necrotic cell death. The polypeptide is Autophagy-related protein 9A (Mus musculus (Mouse)).